A 406-amino-acid chain; its full sequence is Succinylornithine transaminase (406 aa).

Lys252 carries the N6-(pyridoxal phosphate)lysine modification.

This sequence belongs to the class-III pyridoxal-phosphate-dependent aminotransferase family. AstC subfamily. It depends on pyridoxal 5'-phosphate as a cofactor.

The enzyme catalyses N(2)-succinyl-L-ornithine + 2-oxoglutarate = N-succinyl-L-glutamate 5-semialdehyde + L-glutamate. It participates in amino-acid degradation; L-arginine degradation via AST pathway; L-glutamate and succinate from L-arginine: step 3/5. In terms of biological role, catalyzes the transamination of N(2)-succinylornithine and alpha-ketoglutarate into N(2)-succinylglutamate semialdehyde and glutamate. Can also act as an acetylornithine aminotransferase. The protein is Succinylornithine transaminase of Shigella boydii serotype 18 (strain CDC 3083-94 / BS512).